The sequence spans 226 residues: Phosphoglycolate phosphatase (226 aa).

Asp5 acts as the Nucleophile in catalysis. Mg(2+) is bound by residues Asp5 and Asp7. Lys142 is a substrate binding site. Residues Asp164 and Asp168 each contribute to the Mg(2+) site.

This sequence belongs to the archaeal SPP-like hydrolase family. Mg(2+) is required as a cofactor.

The enzyme catalyses 2-phosphoglycolate + H2O = glycolate + phosphate. Its function is as follows. Catalyzes the dephosphorylation of 2-phosphoglycolate. The protein is Phosphoglycolate phosphatase of Sulfurisphaera tokodaii (strain DSM 16993 / JCM 10545 / NBRC 100140 / 7) (Sulfolobus tokodaii).